The following is a 70-amino-acid chain: Large ribosomal subunit protein eL38 (70 aa).

Belongs to the eukaryotic ribosomal protein eL38 family.

The sequence is that of Large ribosomal subunit protein eL38 (RpL38) from Julodis onopordi (Jewel beetle).